The chain runs to 104 residues: MRDPLFKGCTRPAMLMGVPATPLAVCSGTIALLGIWFSIAFLALFPVALLAMRIMIRRDDQQFRLIWLYLRMRWLSRDRTHAFWQSTVYAPLRYAERRQRLRKP.

Residues Ile-30–Leu-50 form a helical membrane-spanning segment.

It belongs to the virB3 family.

It is found in the cell membrane. In Bordetella bronchiseptica (strain ATCC BAA-588 / NCTC 13252 / RB50) (Alcaligenes bronchisepticus), this protein is Type IV secretion system protein PtlB homolog (ptlB).